Consider the following 210-residue polypeptide: Dephospho-CoA kinase (210 aa).

Residues Ile-4–Asn-201 enclose the DPCK domain. Cys-12–Thr-17 lines the ATP pocket.

The protein belongs to the CoaE family.

It localises to the cytoplasm. It carries out the reaction 3'-dephospho-CoA + ATP = ADP + CoA + H(+). It participates in cofactor biosynthesis; coenzyme A biosynthesis; CoA from (R)-pantothenate: step 5/5. Its function is as follows. Catalyzes the phosphorylation of the 3'-hydroxyl group of dephosphocoenzyme A to form coenzyme A. The chain is Dephospho-CoA kinase from Buchnera aphidicola subsp. Schizaphis graminum (strain Sg).